The primary structure comprises 425 residues: Histidine--tRNA ligase (425 aa).

It belongs to the class-II aminoacyl-tRNA synthetase family. In terms of assembly, homodimer.

Its subcellular location is the cytoplasm. The catalysed reaction is tRNA(His) + L-histidine + ATP = L-histidyl-tRNA(His) + AMP + diphosphate + H(+). This Aeromonas salmonicida (strain A449) protein is Histidine--tRNA ligase.